The following is a 430-amino-acid chain: Tyrosine--tRNA ligase (430 aa).

Tyrosine 32 contacts L-tyrosine. The short motif at 37–46 (PTADSLHIGH) is the 'HIGH' region element. 2 residues coordinate L-tyrosine: tyrosine 172 and glutamine 176. Residues 232 to 236 (KFGKT) carry the 'KMSKS' region motif. Lysine 235 contributes to the ATP binding site. Residues 362-429 (VKAVDLFVDN…GKKNYYLIIA (68 aa)) enclose the S4 RNA-binding domain.

Belongs to the class-I aminoacyl-tRNA synthetase family. TyrS type 1 subfamily. In terms of assembly, homodimer.

The protein localises to the cytoplasm. It carries out the reaction tRNA(Tyr) + L-tyrosine + ATP = L-tyrosyl-tRNA(Tyr) + AMP + diphosphate + H(+). In terms of biological role, catalyzes the attachment of tyrosine to tRNA(Tyr) in a two-step reaction: tyrosine is first activated by ATP to form Tyr-AMP and then transferred to the acceptor end of tRNA(Tyr). The sequence is that of Tyrosine--tRNA ligase from Bacteroides fragilis (strain YCH46).